The sequence spans 374 residues: Anhydro-N-acetylmuramic acid kinase (374 aa).

Gly-12–Asp-19 is an ATP binding site.

Belongs to the anhydro-N-acetylmuramic acid kinase family.

It carries out the reaction 1,6-anhydro-N-acetyl-beta-muramate + ATP + H2O = N-acetyl-D-muramate 6-phosphate + ADP + H(+). Its pathway is amino-sugar metabolism; 1,6-anhydro-N-acetylmuramate degradation. It functions in the pathway cell wall biogenesis; peptidoglycan recycling. Its function is as follows. Catalyzes the specific phosphorylation of 1,6-anhydro-N-acetylmuramic acid (anhMurNAc) with the simultaneous cleavage of the 1,6-anhydro ring, generating MurNAc-6-P. Is required for the utilization of anhMurNAc either imported from the medium or derived from its own cell wall murein, and thus plays a role in cell wall recycling. In Salmonella arizonae (strain ATCC BAA-731 / CDC346-86 / RSK2980), this protein is Anhydro-N-acetylmuramic acid kinase.